We begin with the raw amino-acid sequence, 321 residues long: uncharacterized protein (321 aa).

A run of 10 helical transmembrane segments spans residues 6–26 (LFIGALTCLVASMSWGAMFPV), 37–57 (FYFSFIRYGVVTIMLVILLLV), 72–92 (WIILFGVMAFTIYNVLIFLGQ), 100–120 (IMTASIAEALMPMLSIVILWG), 134–154 (ILIAFLGASMVITKGNISFFF), 160–180 (LFSILFIFIGVLGWVVYTMGG), 196–216 (CLFGTAITGIMTAILTAQGYV), 223–243 (VIAAIKYDFLFMITLPGIIAL), 255–275 (SINGILFINFVPITTLLIMVI), and 277–297 (GYNITAFDIVGTLFVIIGLIL). 2 EamA domains span residues 18–146 (MSWG…MVIT) and 175–300 (VYTM…LNNI).

It belongs to the EamA transporter family.

It localises to the cell membrane. This is an uncharacterized protein from Bacillus subtilis (strain 168).